A 391-amino-acid polypeptide reads, in one-letter code: Sister chromatid cohesion protein DCC1 (391 aa).

This sequence belongs to the DCC1 family. In terms of assembly, component of the ctf18-RFC complex which consists of ctf18, ctf8, dscc1 and the RFC complex.

The protein resides in the nucleus. Functionally, loads pcna onto primed templates regulating velocity, spacing and restart activity of replication forks. May couple DNA replication to sister chromatid cohesion. This chain is Sister chromatid cohesion protein DCC1 (dscc1), found in Danio rerio (Zebrafish).